Consider the following 276-residue polypeptide: tRNA dimethylallyltransferase (276 aa).

Positions 9–12 (DSLS) are interaction with substrate tRNA.

Belongs to the IPP transferase family. Monomer. Requires Mg(2+) as cofactor.

The catalysed reaction is adenosine(37) in tRNA + dimethylallyl diphosphate = N(6)-dimethylallyladenosine(37) in tRNA + diphosphate. Catalyzes the transfer of a dimethylallyl group onto the adenine at position 37 in tRNAs that read codons beginning with uridine, leading to the formation of N6-(dimethylallyl)adenosine (i(6)A). In Helicobacter pylori (strain G27), this protein is tRNA dimethylallyltransferase (miaA).